A 168-amino-acid polypeptide reads, in one-letter code: Large ribosomal subunit protein uL10 (168 aa).

This sequence belongs to the universal ribosomal protein uL10 family. In terms of assembly, part of the ribosomal stalk of the 50S ribosomal subunit. The N-terminus interacts with L11 and the large rRNA to form the base of the stalk. The C-terminus forms an elongated spine to which L12 dimers bind in a sequential fashion forming a multimeric L10(L12)X complex.

Forms part of the ribosomal stalk, playing a central role in the interaction of the ribosome with GTP-bound translation factors. The protein is Large ribosomal subunit protein uL10 of Clostridium acetobutylicum (strain ATCC 824 / DSM 792 / JCM 1419 / IAM 19013 / LMG 5710 / NBRC 13948 / NRRL B-527 / VKM B-1787 / 2291 / W).